We begin with the raw amino-acid sequence, 186 residues long: uncharacterized protein (186 aa).

This is an uncharacterized protein from Mycoplasma genitalium (strain ATCC 33530 / DSM 19775 / NCTC 10195 / G37) (Mycoplasmoides genitalium).